The chain runs to 222 residues: Large ribosomal subunit protein uL4 (222 aa).

Belongs to the universal ribosomal protein uL4 family. In terms of assembly, part of the 50S ribosomal subunit.

Its function is as follows. One of the primary rRNA binding proteins, this protein initially binds near the 5'-end of the 23S rRNA. It is important during the early stages of 50S assembly. It makes multiple contacts with different domains of the 23S rRNA in the assembled 50S subunit and ribosome. Forms part of the polypeptide exit tunnel. The chain is Large ribosomal subunit protein uL4 from Acidobacterium capsulatum (strain ATCC 51196 / DSM 11244 / BCRC 80197 / JCM 7670 / NBRC 15755 / NCIMB 13165 / 161).